We begin with the raw amino-acid sequence, 113 residues long: Large ribosomal subunit protein uL24 (113 aa).

The protein belongs to the universal ribosomal protein uL24 family. Part of the 50S ribosomal subunit.

In terms of biological role, one of two assembly initiator proteins, it binds directly to the 5'-end of the 23S rRNA, where it nucleates assembly of the 50S subunit. Its function is as follows. One of the proteins that surrounds the polypeptide exit tunnel on the outside of the subunit. The chain is Large ribosomal subunit protein uL24 from Synechococcus sp. (strain RCC307).